We begin with the raw amino-acid sequence, 508 residues long: Photosystem II CP47 reaction center protein (508 aa).

The next 6 helical transmembrane spans lie at 21–36, 101–115, 140–156, 203–218, 237–252, and 457–472; these read SVHI…WAGS, IVFS…IWHW, GIHL…FGAF, IAAG…FHLS, VLSS…AFVV, and SFAL…HGAR.

This sequence belongs to the PsbB/PsbC family. PsbB subfamily. PSII is composed of 1 copy each of membrane proteins PsbA, PsbB, PsbC, PsbD, PsbE, PsbF, PsbH, PsbI, PsbJ, PsbK, PsbL, PsbM, PsbT, PsbX, PsbY, PsbZ, Psb30/Ycf12, at least 3 peripheral proteins of the oxygen-evolving complex and a large number of cofactors. It forms dimeric complexes. The cofactor is Binds multiple chlorophylls. PSII binds additional chlorophylls, carotenoids and specific lipids..

Its subcellular location is the plastid. It is found in the chloroplast thylakoid membrane. One of the components of the core complex of photosystem II (PSII). It binds chlorophyll and helps catalyze the primary light-induced photochemical processes of PSII. PSII is a light-driven water:plastoquinone oxidoreductase, using light energy to abstract electrons from H(2)O, generating O(2) and a proton gradient subsequently used for ATP formation. This Ipomoea purpurea (Common morning glory) protein is Photosystem II CP47 reaction center protein.